A 285-amino-acid chain; its full sequence is Shikimate dehydrogenase (NADP(+)) (285 aa).

Shikimate-binding positions include 20 to 22 (SLS) and T67. K71 functions as the Proton acceptor in the catalytic mechanism. E83 contributes to the NADP(+) binding site. 2 residues coordinate shikimate: N92 and D107. NADP(+)-binding positions include 132 to 136 (GAGGA) and L230. Y232 contacts shikimate. NADP(+) is bound at residue G253.

The protein belongs to the shikimate dehydrogenase family. As to quaternary structure, homodimer.

It carries out the reaction shikimate + NADP(+) = 3-dehydroshikimate + NADPH + H(+). It participates in metabolic intermediate biosynthesis; chorismate biosynthesis; chorismate from D-erythrose 4-phosphate and phosphoenolpyruvate: step 4/7. Involved in the biosynthesis of the chorismate, which leads to the biosynthesis of aromatic amino acids. Catalyzes the reversible NADPH linked reduction of 3-dehydroshikimate (DHSA) to yield shikimate (SA). This Salinibacter ruber (strain DSM 13855 / M31) protein is Shikimate dehydrogenase (NADP(+)).